Consider the following 600-residue polypeptide: Integrator complex subunit 11 (600 aa).

Zn(2+) contacts are provided by histidine 68, histidine 70, aspartate 72, histidine 73, histidine 157, and aspartate 178. The short motif at 68 to 73 is the HXHXDH motif element; sequence HFHLDH. Glutamate 203 is a catalytic residue. Lysine 381 participates in a covalent cross-link: Glycyl lysine isopeptide (Lys-Gly) (interchain with G-Cter in SUMO). Residue histidine 414 coordinates Zn(2+). Residues lysine 462 and lysine 475 each participate in a glycyl lysine isopeptide (Lys-Gly) (interchain with G-Cter in SUMO) cross-link. A Nuclear localization signal motif is present at residues 469–479; it reads LLPEAKKPRLL.

It belongs to the metallo-beta-lactamase superfamily. RNA-metabolizing metallo-beta-lactamase-like family. INTS11 subfamily. Component of the Integrator complex, composed of core subunits INTS1, INTS2, INTS3, INTS4, INTS5, INTS6, INTS7, INTS8, INTS9/RC74, INTS10, INTS11/CPSF3L, INTS12, INTS13, INTS14 and INTS15. The core complex associates with protein phosphatase 2A subunits PPP2CA and PPP2R1A, to form the Integrator-PP2A (INTAC) complex. INTS11 is part of the RNA endonuclease subcomplex, composed of INTS4, INTS9, INTS11 and inositol hexakisphosphate (InsP6). Interacts with WDR73; interaction is required for the assembly of the RNA endonuclease subcomplex in the cytoplasm. Interacts with BRAT1; interaction is required for the assembly of the RNA endonuclease subcomplex and inhibits the endonuclease activity of INTS11 before formation of mature integrator complex. Zn(2+) serves as cofactor. In terms of processing, sumoylated; sumoylation regulates its subcellular location and is required for integrator complex integrity.

It is found in the nucleus. It localises to the cytoplasm. Its activity is regulated as follows. The RNA endonuclease activity is inhibited by BRAT1 that forms hyrogen bond and hydrophobic interactions with the active site. In terms of biological role, RNA endonuclease component of the integrator complex, a multiprotein complex that terminates RNA polymerase II (Pol II) transcription in the promoter-proximal region of genes. The integrator complex provides a quality checkpoint during transcription elongation by driving premature transcription termination of transcripts that are unfavorably configured for transcriptional elongation: the complex terminates transcription by (1) catalyzing dephosphorylation of the C-terminal domain (CTD) of Pol II subunit POLR2A/RPB1 and SUPT5H/SPT5, (2) degrading the exiting nascent RNA transcript via endonuclease activity and (3) promoting the release of Pol II from bound DNA. The integrator complex is also involved in terminating the synthesis of non-coding Pol II transcripts, such as enhancer RNAs (eRNAs), small nuclear RNAs (snRNAs), telomerase RNAs and long non-coding RNAs (lncRNAs). Within the integrator complex, INTS11 constitutes the RNA endonuclease subunit that degrades exiting nascent RNA transcripts. Mediates recruitment of cytoplasmic dynein to the nuclear envelope, probably as component of the integrator complex. This chain is Integrator complex subunit 11 (Ints11), found in Rattus norvegicus (Rat).